The primary structure comprises 111 residues: Universal stress protein B (111 aa).

The next 2 helical transmembrane spans lie at 1–21 (MIST…NMAR) and 90–110 (FILT…LLIW).

The protein belongs to the universal stress protein B family.

Its subcellular location is the cell inner membrane. The sequence is that of Universal stress protein B from Escherichia fergusonii (strain ATCC 35469 / DSM 13698 / CCUG 18766 / IAM 14443 / JCM 21226 / LMG 7866 / NBRC 102419 / NCTC 12128 / CDC 0568-73).